The sequence spans 1053 residues: 3-hydroxy-3-methylglutaryl-coenzyme A reductase (1053 aa).

Residues 1-8 lie on the Cytoplasmic side of the membrane; that stretch reads MIYKLAAR. The chain crosses the membrane as a helical span at residues 9–29; sequence YPIQVIAIVGILVSMAYFSFL. The Lumenal portion of the chain corresponds to 30-203; sequence EALTQEDFPV…LKIASQASKT (174 aa). Asparagine 137 carries N-linked (GlcNAc...) asparagine glycosylation. The helical transmembrane segment at 204–224 threads the bilayer; that stretch reads ELLIVGTAYACMLISIVSLYL. The SSD domain occupies 204-365; that stretch reads ELLIVGTAYA…FSFFVAILTL (162 aa). Over 225-232 the chain is Cytoplasmic; sequence KMRRLGSK. The helical transmembrane segment at 233–253 threads the bilayer; it reads FWLFFSVLLSTLFSVQFAMTL. The Lumenal portion of the chain corresponds to 254–258; it reads VRASG. The chain crosses the membrane as a helical span at residues 259–279; it reads VRISLVSLIESLPFLINVVAL. Topologically, residues 280–320 are cytoplasmic; the sequence is DKAAELTRQVITRCSVSDSHSPMHEDIAKACRNAAPPILRH. The next 2 membrane-spanning stretches (helical) occupy residues 321–341 and 342–362; these read FSFGIVVLAIFSYCNFGIKQF and FLFAAVMIYDLLLLFSFFVAI. Topologically, residues 363 to 417 are cytoplasmic; that stretch reads LTLKLEMRRYNAKDDVRKVLIEEGLSESTARHVADGNDSSATTSAGSRYFKVRYG. A helical transmembrane segment spans residues 418–438; the sequence is TKIILFIFIAFNLFELCSIPF. Topologically, residues 439 to 526 are lumenal; the sequence is KHYAATSAAA…NNWSHYISAS (88 aa). Asparagine 518 carries N-linked (GlcNAc...) asparagine glycosylation. Residues 527-547 form a helical membrane-spanning segment; that stretch reads FLSKWIVCALSLSIAVNVFLL. Topologically, residues 548 to 1053 are cytoplasmic; that stretch reads NAARLNSIKE…KSVNSRVPGR (506 aa). The Charge relay system role is filled by glutamate 712. Residue 718-724 coordinates CoA; that stretch reads STMRGCK. NADP(+) is bound by residues 779-781 and 806-814; these read SRF and DAMGMNMIS. The active-site Charge relay system is the lysine 846. Residue 875 to 877 participates in CoA binding; it reads VLK. Aspartate 922 acts as the Charge relay system in catalysis. 1017–1018 contributes to the CoA binding site; the sequence is SH. Histidine 1018 serves as the catalytic Proton donor. Position 1022–1023 (1022–1023) interacts with NADP(+); that stretch reads NR. Serine 1024 carries the phosphoserine modification. At threonine 1028 the chain carries Phosphothreonine. Residues 1028–1053 are disordered; the sequence is TPAMDSSAKKPATDALKSVNSRVPGR.

This sequence belongs to the HMG-CoA reductase family.

It localises to the endoplasmic reticulum membrane. It is found in the nucleus envelope. The catalysed reaction is (R)-mevalonate + 2 NADP(+) + CoA = (3S)-3-hydroxy-3-methylglutaryl-CoA + 2 NADPH + 2 H(+). The protein operates within metabolic intermediate biosynthesis; (R)-mevalonate biosynthesis; (R)-mevalonate from acetyl-CoA: step 3/3. In terms of biological role, part of the first module of ergosterol biosynthesis pathway that includes the early steps of the pathway, conserved across all eukaryotes, and which results in the formation of mevalonate from acetyl-coenzyme A (acetyl-CoA). Hmg1 catalyzes the reduction of hydroxymethylglutaryl-CoA (HMG-CoA) to mevalonate. The first module starts with the action of the cytosolic acetyl-CoA acetyltransferase eg10 that catalyzes the formation of acetoacetyl-CoA. The hydroxymethylglutaryl-CoA synthases erg13 then condenses acetyl-CoA with acetoacetyl-CoA to form HMG-CoA. The rate-limiting step of the early module is the reduction to mevalonate by the 3-hydroxy-3-methylglutaryl-coenzyme A (HMG-CoA) reductases hcs1. This chain is 3-hydroxy-3-methylglutaryl-coenzyme A reductase, found in Schizosaccharomyces pombe (strain 972 / ATCC 24843) (Fission yeast).